We begin with the raw amino-acid sequence, 185 residues long: Ribosome-recycling factor (185 aa).

This sequence belongs to the RRF family.

Its subcellular location is the cytoplasm. Functionally, responsible for the release of ribosomes from messenger RNA at the termination of protein biosynthesis. May increase the efficiency of translation by recycling ribosomes from one round of translation to another. The chain is Ribosome-recycling factor from Campylobacter jejuni subsp. doylei (strain ATCC BAA-1458 / RM4099 / 269.97).